We begin with the raw amino-acid sequence, 242 residues long: 1-(5-phosphoribosyl)-5-[(5-phosphoribosylamino)methylideneamino] imidazole-4-carboxamide isomerase (242 aa).

The Proton acceptor role is filled by aspartate 8. Aspartate 129 functions as the Proton donor in the catalytic mechanism.

This sequence belongs to the HisA/HisF family.

The protein localises to the cytoplasm. It carries out the reaction 1-(5-phospho-beta-D-ribosyl)-5-[(5-phospho-beta-D-ribosylamino)methylideneamino]imidazole-4-carboxamide = 5-[(5-phospho-1-deoxy-D-ribulos-1-ylimino)methylamino]-1-(5-phospho-beta-D-ribosyl)imidazole-4-carboxamide. The protein operates within amino-acid biosynthesis; L-histidine biosynthesis; L-histidine from 5-phospho-alpha-D-ribose 1-diphosphate: step 4/9. This chain is 1-(5-phosphoribosyl)-5-[(5-phosphoribosylamino)methylideneamino] imidazole-4-carboxamide isomerase, found in Maridesulfovibrio salexigens (strain ATCC 14822 / DSM 2638 / NCIMB 8403 / VKM B-1763) (Desulfovibrio salexigens).